We begin with the raw amino-acid sequence, 968 residues long: RNA polymerase-associated protein RapA (968 aa).

The Helicase ATP-binding domain maps to 163–332 (EVGSRYAPRV…FARLRLLDPD (170 aa)). 176–183 (DEVGLGKT) is an ATP binding site. Residues 278-281 (DEAH) carry the DEAH box motif. Positions 491–655 (RVDWLIEFLK…EFADELINVL (165 aa)) constitute a Helicase C-terminal domain.

This sequence belongs to the SNF2/RAD54 helicase family. RapA subfamily. In terms of assembly, interacts with the RNAP. Has a higher affinity for the core RNAP than for the holoenzyme. Its ATPase activity is stimulated by binding to RNAP.

Functionally, transcription regulator that activates transcription by stimulating RNA polymerase (RNAP) recycling in case of stress conditions such as supercoiled DNA or high salt concentrations. Probably acts by releasing the RNAP, when it is trapped or immobilized on tightly supercoiled DNA. Does not activate transcription on linear DNA. Probably not involved in DNA repair. In Shewanella frigidimarina (strain NCIMB 400), this protein is RNA polymerase-associated protein RapA.